A 345-amino-acid polypeptide reads, in one-letter code: Anthranilate phosphoribosyltransferase (345 aa).

5-phospho-alpha-D-ribose 1-diphosphate-binding positions include Gly80, 83 to 84 (GD), Thr88, 90 to 93 (NIST), 108 to 116 (KHGNRSVSS), and Ser120. Gly80 serves as a coordination point for anthranilate. Ser92 lines the Mg(2+) pocket. Residue Asn111 participates in anthranilate binding. An anthranilate-binding site is contributed by Arg166. 2 residues coordinate Mg(2+): Asp225 and Glu226.

The protein belongs to the anthranilate phosphoribosyltransferase family. In terms of assembly, homodimer. Mg(2+) serves as cofactor.

It carries out the reaction N-(5-phospho-beta-D-ribosyl)anthranilate + diphosphate = 5-phospho-alpha-D-ribose 1-diphosphate + anthranilate. It functions in the pathway amino-acid biosynthesis; L-tryptophan biosynthesis; L-tryptophan from chorismate: step 2/5. Functionally, catalyzes the transfer of the phosphoribosyl group of 5-phosphorylribose-1-pyrophosphate (PRPP) to anthranilate to yield N-(5'-phosphoribosyl)-anthranilate (PRA). This Acetivibrio thermocellus (strain ATCC 27405 / DSM 1237 / JCM 9322 / NBRC 103400 / NCIMB 10682 / NRRL B-4536 / VPI 7372) (Clostridium thermocellum) protein is Anthranilate phosphoribosyltransferase.